Reading from the N-terminus, the 654-residue chain is Cysteine-rich receptor-like protein kinase 40 (654 aa).

The first 27 residues, 1–27, serve as a signal peptide directing secretion; it reads MGKCSALMIFLSSSLLLVLQTLHVVNA. 2 consecutive Gnk2-homologous domains span residues 28–131 and 143–250; these read VKCF…NQST and WPSP…LYSF. Over 28 to 287 the chain is Extracellular; the sequence is VKCFGNSFNG…VKKGKSIGYG (260 aa). N-linked (GlcNAc...) asparagine glycosylation is found at asparagine 38, asparagine 65, asparagine 128, asparagine 154, asparagine 167, and asparagine 256. A helical transmembrane segment spans residues 288–308; the sequence is GIIAIVVVFTFINLLVFIGFI. Topologically, residues 309-654 are cytoplasmic; it reads KVYARRGKLN…DDVFTELSCR (346 aa). Residues 348 to 619 form the Protein kinase domain; sequence FSSENTLGQG…VIIWLGSETI (272 aa). ATP is bound by residues 354-362 and lysine 376; that span reads LGQGGFGTV. A Phosphotyrosine modification is found at tyrosine 421. Aspartate 473 serves as the catalytic Proton acceptor. Serine 477 carries the post-translational modification Phosphoserine. The residue at position 513 (threonine 513) is a Phosphothreonine. Position 521 is a phosphotyrosine (tyrosine 521).

Belongs to the protein kinase superfamily. Ser/Thr protein kinase family. CRK subfamily.

It localises to the membrane. The enzyme catalyses L-seryl-[protein] + ATP = O-phospho-L-seryl-[protein] + ADP + H(+). It catalyses the reaction L-threonyl-[protein] + ATP = O-phospho-L-threonyl-[protein] + ADP + H(+). This chain is Cysteine-rich receptor-like protein kinase 40 (CRK40), found in Arabidopsis thaliana (Mouse-ear cress).